A 452-amino-acid polypeptide reads, in one-letter code: uncharacterized protein (452 aa).

7 consecutive transmembrane segments (helical) span residues proline 18 to lysine 38, leucine 81 to alanine 101, isoleucine 269 to isoleucine 289, alanine 317 to isoleucine 337, valine 354 to phenylalanine 374, valine 390 to isoleucine 410, and serine 428 to valine 448.

It belongs to the auxin efflux carrier (TC 2.A.69) family.

Its subcellular location is the membrane. This is an uncharacterized protein from Schizosaccharomyces pombe (strain 972 / ATCC 24843) (Fission yeast).